Here is a 171-residue protein sequence, read N- to C-terminus: N5-carboxyaminoimidazole ribonucleotide mutase (171 aa).

Residues serine 10, aspartate 13, and arginine 40 each coordinate substrate.

Belongs to the AIR carboxylase family. Class I subfamily.

It carries out the reaction 5-carboxyamino-1-(5-phospho-D-ribosyl)imidazole + H(+) = 5-amino-1-(5-phospho-D-ribosyl)imidazole-4-carboxylate. It participates in purine metabolism; IMP biosynthesis via de novo pathway; 5-amino-1-(5-phospho-D-ribosyl)imidazole-4-carboxylate from 5-amino-1-(5-phospho-D-ribosyl)imidazole (N5-CAIR route): step 2/2. Catalyzes the conversion of N5-carboxyaminoimidazole ribonucleotide (N5-CAIR) to 4-carboxy-5-aminoimidazole ribonucleotide (CAIR). The polypeptide is N5-carboxyaminoimidazole ribonucleotide mutase (Thermotoga maritima (strain ATCC 43589 / DSM 3109 / JCM 10099 / NBRC 100826 / MSB8)).